The chain runs to 222 residues: Large ribosomal subunit protein uL4 (222 aa).

A disordered region spans residues 42-100; the sequence is AAGRQGTHSTKTRGEVRGGGKKPYRQKGTGRARQGSVRAPQFTGGGTVHGPKPRDYAQR. The segment covering 60–71 has biased composition (basic residues); sequence GGKKPYRQKGTG.

The protein belongs to the universal ribosomal protein uL4 family. Part of the 50S ribosomal subunit.

Functionally, one of the primary rRNA binding proteins, this protein initially binds near the 5'-end of the 23S rRNA. It is important during the early stages of 50S assembly. It makes multiple contacts with different domains of the 23S rRNA in the assembled 50S subunit and ribosome. In terms of biological role, forms part of the polypeptide exit tunnel. The sequence is that of Large ribosomal subunit protein uL4 from Thermobifida fusca (strain YX).